We begin with the raw amino-acid sequence, 389 residues long: Chalcone synthase (389 aa).

C164 is a catalytic residue.

Belongs to the thiolase-like superfamily. Chalcone/stilbene synthases family.

It carries out the reaction (E)-4-coumaroyl-CoA + 3 malonyl-CoA + 3 H(+) = 2',4,4',6'-tetrahydroxychalcone + 3 CO2 + 4 CoA. Its pathway is secondary metabolite biosynthesis; flavonoid biosynthesis. In terms of biological role, the primary product of this enzyme is 4,2',4',6'-tetrahydroxychalcone (also termed naringenin-chalcone or chalcone) which can under specific conditions spontaneously isomerize into naringenin. The sequence is that of Chalcone synthase (CHS) from Hydrangea macrophylla (Bigleaf hydrangea).